A 350-amino-acid chain; its full sequence is Protein-glutamate methylesterase/protein-glutamine glutaminase (350 aa).

One can recognise a Response regulatory domain in the interval 5–122 (RVLCVDDSAL…REGMLAYSEL (118 aa)). Position 56 is a 4-aspartylphosphate (Asp56). The CheB-type methylesterase domain maps to 153–345 (LLSSEKLIAI…QRMLAQISAG (193 aa)). Active-site residues include Ser165, His191, and Asp287.

The protein belongs to the CheB family. Post-translationally, phosphorylated by CheA. Phosphorylation of the N-terminal regulatory domain activates the methylesterase activity.

It localises to the cytoplasm. The catalysed reaction is [protein]-L-glutamate 5-O-methyl ester + H2O = L-glutamyl-[protein] + methanol + H(+). The enzyme catalyses L-glutaminyl-[protein] + H2O = L-glutamyl-[protein] + NH4(+). Involved in chemotaxis. Part of a chemotaxis signal transduction system that modulates chemotaxis in response to various stimuli. Catalyzes the demethylation of specific methylglutamate residues introduced into the chemoreceptors (methyl-accepting chemotaxis proteins or MCP) by CheR. Also mediates the irreversible deamidation of specific glutamine residues to glutamic acid. Does not interact with the C-terminal pentapeptide of the chemoreceptors. The chain is Protein-glutamate methylesterase/protein-glutamine glutaminase from Pectobacterium atrosepticum (strain SCRI 1043 / ATCC BAA-672) (Erwinia carotovora subsp. atroseptica).